Here is a 114-residue protein sequence, read N- to C-terminus: Procyclic form-specific polypeptide A-alpha (114 aa).

Residues 1 to 27 form the signal peptide; the sequence is MAPRSLYLLAILLFSANLFAGVGFAAA. The tract at residues 33–95 is disordered; that stretch reads SNVIVKGGKG…EPEPEPGAAT (63 aa). The span at 47–89 shows a compositional bias: acidic residues; that stretch reads DGPEEPEETGPEETGPEETGPEETGPEETGPEETGPEETEPEP. 7 tandem repeats follow at residues 48 to 52, 56 to 60, 61 to 65, 66 to 70, 71 to 75, 76 to 80, and 81 to 85. Residues 48 to 85 form a 7 X 5 AA tandem repeats of G-P-E-E-[PT] region; that stretch reads GPEEPEETGPEETGPEETGPEETGPEETGPEETGPEET. G92 carries the GPI-anchor amidated glycine lipid modification. The propeptide occupies 93 to 114; sequence AATLKSVALPFAVAAAALVAAF.

It localises to the cell membrane. In terms of biological role, major surface antigen of procyclic forms. The protein is Procyclic form-specific polypeptide A-alpha (PARPA-ALPHA) of Trypanosoma brucei brucei.